The primary structure comprises 92 residues: Acyl carrier protein AcpXL (92 aa).

The Carrier domain occupies 2-88 (TATFDKVADI…NLCAKIDELK (87 aa)). Serine 37 is subject to O-(pantetheine 4'-phosphoryl)serine.

4'-phosphopantetheine is transferred from CoA to a specific serine of apo-ACP by AcpS. This modification is essential for activity because fatty acids are bound in thioester linkage to the sulfhydryl of the prosthetic group.

Its subcellular location is the cytoplasm. It functions in the pathway glycolipid biosynthesis; KDO(2)-lipid A biosynthesis. Carrier of the growing fatty acid chain in fatty acid biosynthesis. Is involved in the transfer of long hydroxylated fatty acids to lipid A. Is acylated predominantly with 27-hydroxyoctacosanoic acid. This chain is Acyl carrier protein AcpXL (acpXL), found in Rhizobium etli (strain ATCC 51251 / DSM 11541 / JCM 21823 / NBRC 15573 / CFN 42).